Consider the following 310-residue polypeptide: Ribosomal RNA small subunit methyltransferase H (310 aa).

S-adenosyl-L-methionine is bound by residues 32-34 (GGH), Asp-52, Phe-79, Asp-100, and Gln-107.

This sequence belongs to the methyltransferase superfamily. RsmH family.

The protein resides in the cytoplasm. It carries out the reaction cytidine(1402) in 16S rRNA + S-adenosyl-L-methionine = N(4)-methylcytidine(1402) in 16S rRNA + S-adenosyl-L-homocysteine + H(+). Its function is as follows. Specifically methylates the N4 position of cytidine in position 1402 (C1402) of 16S rRNA. This is Ribosomal RNA small subunit methyltransferase H from Bacillus cereus (strain AH187).